The following is a 187-amino-acid chain: Guanylate kinase (187 aa).

Ser-2 is modified (N-acetylserine). The Guanylate kinase-like domain occupies 2-184 (SRPIVISGPS…AYKELKDFIF (183 aa)). An ATP-binding site is contributed by 9–16 (GPSGTGKS). GMP contacts are provided by residues Ser-35, 39-42 (RTPR), Tyr-51, Glu-70, 79-81 (YGS), and Asp-101. Ser-149 is subject to Phosphoserine. A Phosphotyrosine modification is found at Tyr-157.

It belongs to the guanylate kinase family. In terms of assembly, monomer.

The catalysed reaction is GMP + ATP = GDP + ADP. Its function is as follows. Catalyzes the reversible transfer of the terminal phosphoryl group of ATP to the acceptor molecule GMP. Essential for recycling GMP and indirectly, cGMP. This is Guanylate kinase (GUK1) from Saccharomyces cerevisiae (strain ATCC 204508 / S288c) (Baker's yeast).